A 361-amino-acid polypeptide reads, in one-letter code: Pseudouridine-5'-phosphate glycosidase (361 aa).

Glu27 acts as the Proton donor in catalysis. 2 residues coordinate substrate: Lys88 and Val108. Asp140 lines the Mn(2+) pocket. 142-144 is a substrate binding site; sequence SAD. Catalysis depends on Lys161, which acts as the Nucleophile. A disordered region spans residues 306 to 361; the sequence is DRSPTDPAAPDPTAPDPAAPDPTAPDPAAPDSAAPDLAGPDPSAPDPAAVARAHRP. Residues 312-333 show a composition bias toward pro residues; sequence PAAPDPTAPDPAAPDPTAPDPA. Positions 334–354 are enriched in low complexity; it reads APDSAAPDLAGPDPSAPDPAA.

The protein belongs to the pseudouridine-5'-phosphate glycosidase family. In terms of assembly, homotrimer. It depends on Mn(2+) as a cofactor.

The enzyme catalyses D-ribose 5-phosphate + uracil = psi-UMP + H2O. In terms of biological role, catalyzes the reversible cleavage of pseudouridine 5'-phosphate (PsiMP) to ribose 5-phosphate and uracil. Functions biologically in the cleavage direction, as part of a pseudouridine degradation pathway. The sequence is that of Pseudouridine-5'-phosphate glycosidase from Frankia alni (strain DSM 45986 / CECT 9034 / ACN14a).